The chain runs to 256 residues: Triosephosphate isomerase (256 aa).

A substrate-binding site is contributed by Asn-9–Lys-11. Catalysis depends on His-94, which acts as the Electrophile. Glu-166 functions as the Proton acceptor in the catalytic mechanism. Residues Gly-172, Ser-211, and Gly-232–Gly-233 each bind substrate.

It belongs to the triosephosphate isomerase family. Homodimer.

Its subcellular location is the cytoplasm. It catalyses the reaction D-glyceraldehyde 3-phosphate = dihydroxyacetone phosphate. The protein operates within carbohydrate biosynthesis; gluconeogenesis. It functions in the pathway carbohydrate degradation; glycolysis; D-glyceraldehyde 3-phosphate from glycerone phosphate: step 1/1. Its function is as follows. Involved in the gluconeogenesis. Catalyzes stereospecifically the conversion of dihydroxyacetone phosphate (DHAP) to D-glyceraldehyde-3-phosphate (G3P). The polypeptide is Triosephosphate isomerase (Natranaerobius thermophilus (strain ATCC BAA-1301 / DSM 18059 / JW/NM-WN-LF)).